We begin with the raw amino-acid sequence, 280 residues long: L-proline cis-4-hydroxylase (280 aa).

Residues H106, D108, and H154 each contribute to the Fe cation site. R164 lines the 2-oxoglutarate pocket.

The protein belongs to the L-proline cis-4-/cis-3-hydroxylase family. Fe(2+) is required as a cofactor.

The enzyme catalyses L-proline + 2-oxoglutarate + O2 = cis-4-hydroxy-L-proline + succinate + CO2. Inhibited by metal ions such as Co(2+), Zn(2+), Cu(2+) or Ni(2+). Is also inhibited by EDTA or diethylpyrocarbonate (DEPC) in vitro. Unlike the procollagen-proline cis-3- and trans-4-hydroxylases from mammals, does not necessarily require L-ascorbate for activity although it does increase the activity of the enzyme. Its function is as follows. Dioxygenase that catalyzes the 2-oxoglutarate-dependent selective hydroxylation of free L-proline to cis-4-hydroxy-L-proline (cis-4-Hyp). In Rhizobium meliloti (strain 1021) (Ensifer meliloti), this protein is L-proline cis-4-hydroxylase.